The primary structure comprises 3183 residues: WD repeat- and FYVE domain-containing protein 4 (3183 aa).

Residues 1 to 15 show a composition bias toward basic and acidic residues; sequence MEAEDLSKTEDRPED. 4 disordered regions span residues 1–37, 790–811, 938–977, and 1828–1852; these read MEAEDLSKTEDRPEDPGFQNEGQSPAVKPSFSLEGQS, AGQEPSVDAQKAEAGGRQGKFK, KSLHLPPGHEDNPGCSGSCAATAEKPTDSSPRPGGSQALR, and KETTSESSRNTSSPGASAEASHAAE. The span at 1832 to 1852 shows a compositional bias: low complexity; it reads SESSRNTSSPGASAEASHAAE. Residues 2383 to 2508 form the BEACH-type PH domain; sequence LDGEKVSQKV…DRSKALKSFS (126 aa). Residues 2525–2819 enclose the BEACH domain; sequence NLRKHPGFDR…QIFTKPHPSR (295 aa). The segment at 2812–2836 is disordered; it reads FTKPHPSRNTTGKNPGPGKDASTPV. 5 WD repeats span residues 2930–2969, 2979–3018, 3021–3060, 3070–3108, and 3150–3183; these read LAAWGPCLCAVCPSPTMIVTSGASAVVCIWELSLVKGRPR, GHTQAVTCLTASVTFSLLVSGSQDRTCILWDLDHLSRVAC, VHREGISAIAISDVSGTIVSCAGAHLSLWNVNGQPLASIT, TCCCIVEGPAWDASHVIITGSKDGMVRIWKTEDVKMPVP, and KASPAVTALAITRNQSKLLVGDEKGRIFCWSADG.

Interacts with HSP90AB1. In terms of tissue distribution, highly expressed in immune tissues, especially B lymphocytes.

It is found in the early endosome. The protein localises to the endoplasmic reticulum. Its function is as follows. Plays a critical role in the regulation of cDC1-mediated cross-presentation of viral and tumor antigens in dendritic cells. Mechanistically, acts near the plasma membrane and interacts with endosomal membranes to promote endosomal-to-cytosol antigen trafficking. Also plays a role in B-cell survival through regulation of autophagy. The chain is WD repeat- and FYVE domain-containing protein 4 from Mus musculus (Mouse).